We begin with the raw amino-acid sequence, 130 residues long: Serum amyloid A protein (130 aa).

An N-terminal signal peptide occupies residues 1-18; it reads MKLFTGLILCSLVLGVHS. Residue glutamine 19 is modified to Pyrrolidone carboxylic acid. The interval 86–130 is disordered; sequence TDPLFKGTTSGQGQEDSRADQAANEWGRSGKDPNHFRPAGLPDKY.

The protein belongs to the SAA family. This protein is the precursor of amyloid protein A, which is formed by the removal of residues from the C-terminal end. In terms of tissue distribution, expressed by the liver; secreted in plasma.

The protein resides in the secreted. In terms of biological role, major acute phase reactant. Apolipoprotein of the HDL complex. The polypeptide is Serum amyloid A protein (SAA1) (Bos taurus (Bovine)).